Consider the following 239-residue polypeptide: Pyridoxine 5'-phosphate synthase (239 aa).

Residue asparagine 7 participates in 3-amino-2-oxopropyl phosphate binding. 9–10 (DH) contributes to the 1-deoxy-D-xylulose 5-phosphate binding site. A 3-amino-2-oxopropyl phosphate-binding site is contributed by arginine 18. Histidine 43 acts as the Proton acceptor in catalysis. 1-deoxy-D-xylulose 5-phosphate contacts are provided by arginine 45 and histidine 50. Glutamate 70 (proton acceptor) is an active-site residue. Threonine 100 serves as a coordination point for 1-deoxy-D-xylulose 5-phosphate. Histidine 191 serves as the catalytic Proton donor. 3-amino-2-oxopropyl phosphate is bound by residues glycine 192 and 213-214 (GH).

The protein belongs to the PNP synthase family. As to quaternary structure, homooctamer; tetramer of dimers.

The protein localises to the cytoplasm. It carries out the reaction 3-amino-2-oxopropyl phosphate + 1-deoxy-D-xylulose 5-phosphate = pyridoxine 5'-phosphate + phosphate + 2 H2O + H(+). Its pathway is cofactor biosynthesis; pyridoxine 5'-phosphate biosynthesis; pyridoxine 5'-phosphate from D-erythrose 4-phosphate: step 5/5. In terms of biological role, catalyzes the complicated ring closure reaction between the two acyclic compounds 1-deoxy-D-xylulose-5-phosphate (DXP) and 3-amino-2-oxopropyl phosphate (1-amino-acetone-3-phosphate or AAP) to form pyridoxine 5'-phosphate (PNP) and inorganic phosphate. This is Pyridoxine 5'-phosphate synthase from Citrifermentans bemidjiense (strain ATCC BAA-1014 / DSM 16622 / JCM 12645 / Bem) (Geobacter bemidjiensis).